The sequence spans 61 residues: Protein translocase subunit SecE (61 aa).

A helical transmembrane segment spans residues 39-59; it reads VGIIIIGLIGFILSIVSQVLF.

The protein belongs to the SecE/SEC61-gamma family. In terms of assembly, component of the Sec protein translocase complex. Heterotrimer consisting of SecY (alpha), SecG (beta) and SecE (gamma) subunits. The heterotrimers can form oligomers, although 1 heterotrimer is thought to be able to translocate proteins. Interacts with the ribosome. May interact with SecDF, and other proteins may be involved.

The protein resides in the cell membrane. Its function is as follows. Essential subunit of the Sec protein translocation channel SecYEG. Clamps together the 2 halves of SecY. May contact the channel plug during translocation. This is Protein translocase subunit SecE from Methanosphaera stadtmanae (strain ATCC 43021 / DSM 3091 / JCM 11832 / MCB-3).